The sequence spans 222 residues: Disulfide bond formation protein D (222 aa).

The signal sequence occupies residues 1 to 36 (MKKKQQSSAKFAVILTVVVVVLLAAIVIINNKTEQG). In terms of domain architecture, Thioredoxin spans 37-220 (NDAVSGQPSI…IKETIEKELK (184 aa)). Cys-69 and Cys-72 are disulfide-bonded.

The protein belongs to the thioredoxin family. DsbA subfamily.

It localises to the cell membrane. The protein localises to the membrane raft. Its function is as follows. Required for the stabilization, possibly via formation of a disulfide bond, of the obligatory competence protein ComGC. May be required for the stability of secreted proteins with disulfide bonds. Not required for sporulation. In Bacillus subtilis (strain 168), this protein is Disulfide bond formation protein D (bdbD).